Reading from the N-terminus, the 264-residue chain is Low molecular mass lipoprotein PBMHP-12 (264 aa).

Positions 1–16 are cleaved as a signal peptide; the sequence is MKLLVVFAMCVPAASA.

It belongs to the 30 kDa lipoprotein family.

It localises to the secreted. This Bombyx mori (Silk moth) protein is Low molecular mass lipoprotein PBMHP-12.